Reading from the N-terminus, the 405-residue chain is Elongation factor Tu (405 aa).

The tr-type G domain maps to Lys-10–Glu-215. The G1 stretch occupies residues Gly-19–Thr-26. Residue Gly-19 to Thr-26 participates in GTP binding. Residue Thr-26 participates in Mg(2+) binding. Positions Gly-61–Asn-65 are G2. The G3 stretch occupies residues Asp-82–Gly-85. GTP contacts are provided by residues Asp-82–His-86 and Asn-137–Asp-140. Residues Asn-137–Asp-140 form a G4 region. The segment at Ser-175–Leu-177 is G5.

Belongs to the TRAFAC class translation factor GTPase superfamily. Classic translation factor GTPase family. EF-Tu/EF-1A subfamily. As to quaternary structure, monomer.

The protein resides in the cytoplasm. It catalyses the reaction GTP + H2O = GDP + phosphate + H(+). Functionally, GTP hydrolase that promotes the GTP-dependent binding of aminoacyl-tRNA to the A-site of ribosomes during protein biosynthesis. This is Elongation factor Tu from Deinococcus geothermalis (strain DSM 11300 / CIP 105573 / AG-3a).